Here is a 375-residue protein sequence, read N- to C-terminus: Beta-1,3-N-acetylglucosaminyltransferase lunatic fringe (375 aa).

Over 1 to 8 (MLKNWGKK) the chain is Cytoplasmic. The helical; Signal-anchor for type II membrane protein transmembrane segment at 9–29 (LLLSIVGATLTCLLVLVVDQQ) threads the bilayer. Over 30-375 (SRHMLETQSD…TPWCPWKAAY (346 aa)) the chain is Lumenal. Residues 53–73 (DLDPANPGDGGDPANSAQDSG) are disordered. Arginine 125 contacts substrate. Asparagine 163 is a glycosylation site (N-linked (GlcNAc...) asparagine). 2 disulfide bridges follow: cysteine 164–cysteine 175 and cysteine 193–cysteine 256. Aspartate 197 contacts substrate. Aspartate 198 is a binding site for Mn(2+). The active site involves aspartate 286. Histidine 310 serves as a coordination point for Mn(2+). Cysteine 360 and cysteine 369 are oxidised to a cystine.

Belongs to the glycosyltransferase 31 family. The cofactor is Mn(2+). Requires Co(2+) as cofactor. In terms of processing, a soluble form may be derived from the membrane form by proteolytic processing. Detected in the neural tube, the eye and the otic vesicle, expression coincides with the region that produces the medial, intermediate and lateral neurons.

The protein resides in the golgi apparatus membrane. The catalysed reaction is 3-O-(alpha-L-fucosyl)-L-threonyl-[EGF-like domain protein] + UDP-N-acetyl-alpha-D-glucosamine = 3-O-(N-acetyl-beta-D-glucosaminyl-(1-&gt;3)-alpha-L-fucosyl)-L-threonyl-[EGF-like domain protein] + UDP + H(+). It catalyses the reaction 3-O-(alpha-L-fucosyl)-L-seryl-[EGF-like domain protein] + UDP-N-acetyl-alpha-D-glucosamine = 3-O-(N-acetyl-beta-D-glucosaminyl-(1-&gt;3)-alpha-L-fucosyl)-L-seryl-[EGF-like domain protein] + UDP + H(+). In terms of biological role, glycosyltransferase that initiates the elongation of O-linked fucose residues attached to EGF-like repeats in the extracellular domain of Notch molecules. Essential mediator of somite segmentation and patterning. May be involved in mesoderm development. The protein is Beta-1,3-N-acetylglucosaminyltransferase lunatic fringe (lfng) of Xenopus laevis (African clawed frog).